The chain runs to 402 residues: Proline-rich protein 25 (402 aa).

3 disordered regions span residues 1–29 (MARTDQKPPCRGGCWGQPGHPNTGGAAAH), 109–255 (TVPG…MVGS), and 337–371 (EAAQDPATRRTAPPRRTASPEPPAPGAPLPACPGR). Residues 345-355 (RRTAPPRRTAS) are compositionally biased toward low complexity. The span at 356–367 (PEPPAPGAPLPA) shows a compositional bias: pro residues.

The polypeptide is Proline-rich protein 25 (PRR25) (Homo sapiens (Human)).